The following is a 289-amino-acid chain: Inorganic pyrophosphatase (289 aa).

Ser-2 is modified (N-acetylserine). Lys-57 carries the post-translational modification N6-acetyllysine. Mg(2+) is bound by residues Asp-116, Asp-121, and Asp-153. At Lys-228 the chain carries N6-acetyllysine. Ser-250 bears the Phosphoserine mark.

This sequence belongs to the PPase family. As to quaternary structure, homodimer. It depends on Mg(2+) as a cofactor.

It is found in the cytoplasm. It catalyses the reaction diphosphate + H2O = 2 phosphate + H(+). This is Inorganic pyrophosphatase (PPA1) from Pongo abelii (Sumatran orangutan).